We begin with the raw amino-acid sequence, 238 residues long: Phosphoribosylaminoimidazole-succinocarboxamide synthase (238 aa).

The protein belongs to the SAICAR synthetase family.

The catalysed reaction is 5-amino-1-(5-phospho-D-ribosyl)imidazole-4-carboxylate + L-aspartate + ATP = (2S)-2-[5-amino-1-(5-phospho-beta-D-ribosyl)imidazole-4-carboxamido]succinate + ADP + phosphate + 2 H(+). It participates in purine metabolism; IMP biosynthesis via de novo pathway; 5-amino-1-(5-phospho-D-ribosyl)imidazole-4-carboxamide from 5-amino-1-(5-phospho-D-ribosyl)imidazole-4-carboxylate: step 1/2. In Alcanivorax borkumensis (strain ATCC 700651 / DSM 11573 / NCIMB 13689 / SK2), this protein is Phosphoribosylaminoimidazole-succinocarboxamide synthase.